Consider the following 580-residue polypeptide: Putative ankyrin repeat protein L63 (580 aa).

14 ANK repeats span residues 81–110 (SLNR…DFRI), 111–140 (DNDY…NIGA), 141–170 (NDNC…DINA), 172–200 (NNYP…DIRA), 202–230 (DDYV…VLNK), 314–339 (SLDD…LLGA), 340–369 (SERK…NIKC), 370–399 (GSNC…DINS), 400–429 (GNNY…NIRA), 431–459 (NDRA…NIRA), 461–489 (DDRA…DIKA), 490–519 (GDDY…NIKA), 521–549 (DDYA…DIRA), and 551–579 (NNYA…VINP).

This chain is Putative ankyrin repeat protein L63, found in Acanthamoeba polyphaga (Amoeba).